We begin with the raw amino-acid sequence, 176 residues long: Zinc finger A20 and AN1 domain-containing stress-associated protein 9 (176 aa).

Residues 16–50 form an A20-type zinc finger; that stretch reads ASEPKLCVKGCGFFGSPSNMDLCSKCYRGICAEEA. Zn(2+)-binding residues include cysteine 22, cysteine 26, cysteine 38, cysteine 41, cysteine 117, cysteine 120, cysteine 131, cysteine 133, cysteine 138, histidine 141, histidine 147, and cysteine 149. The segment at 111 to 157 adopts an AN1-type zinc-finger fold; that stretch reads PARTNRCLCCNKKVGIMGFKCKCGSTFCGEHRYPETHDCSFDFKEVG.

May be involved in environmental stress response. The chain is Zinc finger A20 and AN1 domain-containing stress-associated protein 9 (SAP9) from Arabidopsis thaliana (Mouse-ear cress).